The sequence spans 501 residues: Lysine--tRNA ligase (501 aa).

The Mg(2+) site is built by E411 and E418.

Belongs to the class-II aminoacyl-tRNA synthetase family. Homodimer. The cofactor is Mg(2+).

It is found in the cytoplasm. The enzyme catalyses tRNA(Lys) + L-lysine + ATP = L-lysyl-tRNA(Lys) + AMP + diphosphate. The polypeptide is Lysine--tRNA ligase (Clostridium perfringens (strain 13 / Type A)).